The primary structure comprises 289 residues: Bifunctional protein FolD (289 aa).

NADP(+)-binding positions include 165-167 (GAS) and Ser-190.

It belongs to the tetrahydrofolate dehydrogenase/cyclohydrolase family. Homodimer.

The enzyme catalyses (6R)-5,10-methylene-5,6,7,8-tetrahydrofolate + NADP(+) = (6R)-5,10-methenyltetrahydrofolate + NADPH. It carries out the reaction (6R)-5,10-methenyltetrahydrofolate + H2O = (6R)-10-formyltetrahydrofolate + H(+). Its pathway is one-carbon metabolism; tetrahydrofolate interconversion. Functionally, catalyzes the oxidation of 5,10-methylenetetrahydrofolate to 5,10-methenyltetrahydrofolate and then the hydrolysis of 5,10-methenyltetrahydrofolate to 10-formyltetrahydrofolate. The protein is Bifunctional protein FolD of Ralstonia pickettii (strain 12J).